The chain runs to 206 residues: MTKRTSAKYKIDRRMGENIWGRPKSPVNRREYGPGQHGQRRKQKMSDFGLQLRAKQKLKGYYGDLTEKQFRRIYAEAERVKGDTGENLIGLLERRLDAVVYRAKFVPTVFAARQFVNHGHVLVNGERVNIPSYRVKEGDVIEVREKSRQMAALLEATQLPERDVPDYVDADHNKMKATFVRTPGLADVPYPVMMEPNLVIEYYAQN.

The disordered stretch occupies residues 18-46 (NIWGRPKSPVNRREYGPGQHGQRRKQKMS). An S4 RNA-binding domain is found at 94–154 (RRLDAVVYRA…EKSRQMAALL (61 aa)).

The protein belongs to the universal ribosomal protein uS4 family. In terms of assembly, part of the 30S ribosomal subunit. Contacts protein S5. The interaction surface between S4 and S5 is involved in control of translational fidelity.

In terms of biological role, one of the primary rRNA binding proteins, it binds directly to 16S rRNA where it nucleates assembly of the body of the 30S subunit. Its function is as follows. With S5 and S12 plays an important role in translational accuracy. The protein is Small ribosomal subunit protein uS4 of Dinoroseobacter shibae (strain DSM 16493 / NCIMB 14021 / DFL 12).